An 803-amino-acid chain; its full sequence is E3 ubiquitin-protein ligase UHRF2 (803 aa).

Positions 1–78 constitute a Ubiquitin-like domain; that stretch reads MWIQVRTIDG…IQLLVRPDSS (78 aa). 4 stretches are compositionally biased toward polar residues: residues 79–96, 106–115, 167–181, and 189–200; these read LPST…SSHN, GGSSSQPSTS, KNGS…NVNH, and KLDNVPSTSNSD. Disordered stretches follow at residues 79-115 and 154-200; these read LPST…PSTS and RASD…SNSD. A required for interaction with histone H3 region spans residues 118–312; sequence TCLIDPGFGL…VDEIFKIEKP (195 aa). An interaction with PCNP region spans residues 195 to 289; the sequence is STSNSDSVAA…KEVRVKVFLG (95 aa). The PHD-type zinc finger occupies 340–396; sequence DKTCHMCSCHKCGEKRDPNMQLLCDECNMAYHIYCLSPPLDKVPEEEYWYCPSCKTD. The segment at 415–645 is methyl-CpG binding and interaction with HDAC1; it reads KMPSASTESR…LQYPAGYPSE (231 aa). In terms of domain architecture, YDG spans 449-613; that stretch reads GPIPGIPVGS…FLVWRYLLRR (165 aa). Residues 643 to 676 are disordered; the sequence is PSEKEGKKTKGQSKKQGSEATKRPASDDECPGDS. A compositionally biased stretch (basic and acidic residues) spans 658-668; the sequence is QGSEATKRPAS. Ser668 carries the post-translational modification Phosphoserine. The segment at 734 to 773 adopts an RING-type zinc-finger fold; sequence CVCCQELVYQPVTTECFHNVCKDCLQRSFKAQVFSCPACR.

In terms of assembly, homodimer; disulfide-linked. Binds methylated CpG containing oligonucleotides. Interacts with H3; the interaction has a preference for the 'Lys-9' trimethylated form of H3 (H3K9me3). Interacts with PCNP. Interacts with HDAC1. Interacts directly with CCNE1; the interaction ubiquitinates CCNE1 and appears independent of CCNE1 phosphorylation. Interacts with CCND1; the interaction ubiquitinates CCND1 and appears independent of CCND1 phosphorylation. Interacts with p53/TP53 and RB1. Interacts with UBE2I. Interacts with ZNF618. Interacts with UHRF1. Interacts with FANCD2. Interacts with ATR. Interacts with PCNA. May be autoubiquitinated; which may lead to proteasomal degradation. Post-translationally, phosphorylated. Phosphorylation may be mediated by CDK2. In terms of processing, autosumoylated. Mostly detected in several tissues, including the thymus, spleen, lung, adrenal gland, and ovary. In addition, found in several tissues in the brain (cerebellum, hippocampus, and cerebral cortex).

The protein localises to the nucleus. It is found in the chromosome. It carries out the reaction S-ubiquitinyl-[E2 ubiquitin-conjugating enzyme]-L-cysteine + [acceptor protein]-L-lysine = [E2 ubiquitin-conjugating enzyme]-L-cysteine + N(6)-ubiquitinyl-[acceptor protein]-L-lysine.. It participates in protein modification; protein ubiquitination. Its activity is regulated as follows. E3 ligase activity is robustly activated by 5-hydroxy-methylcytosine. E3 ubiquitin ligase that plays important roles in DNA methylation, histone modifications, cell cycle and DNA repair. Acts as a specific reader for 5-hydroxymethylcytosine (5hmC) and thereby recruits various substrates to these sites to ubiquitinate them. This activity also allows the maintenance of 5mC levels at specific genomic loci and regulates neuron-related gene expression. Participates in cell cycle regulation by ubiquitinating cyclins CCND1 and CCNE1 and thus inducing G1 arrest. Also ubiquitinates PCNP leading to its degradation by the proteasome. Plays an active role in DNA damage repair by ubiquitinating p21/CDKN1A leading to its proteasomal degradation. Also promotes DNA repair by acting as an interstrand cross-links (ICLs) sensor. Mechanistically, cooperates with UHRF1 to ensure recruitment of FANCD2 to ICLs, leading to FANCD2 monoubiquitination and subsequent activation. Contributes to UV-induced DNA damage response by physically interacting with ATR in response to irradiation, thereby promoting ATR activation. This chain is E3 ubiquitin-protein ligase UHRF2 (Uhrf2), found in Mus musculus (Mouse).